We begin with the raw amino-acid sequence, 184 residues long: Uroplakin-2 (184 aa).

An N-terminal signal peptide occupies residues 1 to 25 (MASPLPVRTLPLILILLAVLAPGAS). Residues 26–84 (DFNISSLSGPLSPALTESLLVALPPCHLTGGNATLMVRRANDSKVVKSSFMVPPCRGRR) constitute a propeptide that is removed on maturation. 3 N-linked (GlcNAc...) asparagine glycosylation sites follow: asparagine 28, asparagine 57, and asparagine 66. Residues 85-155 (ELVSVVDSGS…IGLGMARTGG (71 aa)) lie on the Lumenal side of the membrane. The chain crosses the membrane as a helical span at residues 156–180 (MVVITVLLSVAMFLLVVGFITALAL). At 181–184 (GARK) the chain is on the cytoplasmic side.

Belongs to the uroplakin-2 family. Interacts with uroplakin-1a (UPK1A). In terms of tissue distribution, expressed only in the urothelium. Localizes to urothelial superficial cells.

The protein resides in the cell membrane. In terms of biological role, component of the asymmetric unit membrane (AUM); a highly specialized biomembrane elaborated by terminally differentiated urothelial cells. May play an important role in regulating the assembly of the AUM. This chain is Uroplakin-2 (UPK2), found in Sus scrofa (Pig).